Reading from the N-terminus, the 123-residue chain is Small ribosomal subunit protein uS12 (123 aa).

The disordered stretch occupies residues 1 to 31 (MPTINQLIRKPREAQKARDKAPALQASPQKR). Over residues 10-21 (KPREAQKARDKA) the composition is skewed to basic and acidic residues. 3-methylthioaspartic acid is present on Asp-89.

The protein belongs to the universal ribosomal protein uS12 family. Part of the 30S ribosomal subunit. Contacts proteins S8 and S17. May interact with IF1 in the 30S initiation complex.

With S4 and S5 plays an important role in translational accuracy. In terms of biological role, interacts with and stabilizes bases of the 16S rRNA that are involved in tRNA selection in the A site and with the mRNA backbone. Located at the interface of the 30S and 50S subunits, it traverses the body of the 30S subunit contacting proteins on the other side and probably holding the rRNA structure together. The combined cluster of proteins S8, S12 and S17 appears to hold together the shoulder and platform of the 30S subunit. The chain is Small ribosomal subunit protein uS12 from Xanthobacter autotrophicus (strain ATCC BAA-1158 / Py2).